Consider the following 189-residue polypeptide: MTIKSDKWIRRMAQQHGMIEPFEPGQIRQDANGNKIVSYGTSSYGYDIRCAPEFKVFTNIHSTVVDPKNFDEKSFVDFHGDSCIIPPNSFALARTMEYFRIPRNVLTICLGKSTYARCGIIVNVTPFEPEWEGYVTLEFSNTTPLPAKIYAGEGCAQVLFFESDEECETSYKDRGGKYQGQVGVTLPRA.

Residues 112-117 (KSTYAR), 136-138 (TLE), glutamine 157, tyrosine 171, and glutamine 181 contribute to the dCTP site. Catalysis depends on glutamate 138, which acts as the Proton donor/acceptor.

The protein belongs to the dCTP deaminase family. In terms of assembly, homotrimer.

It catalyses the reaction dCTP + H2O + H(+) = dUTP + NH4(+). Its pathway is pyrimidine metabolism; dUMP biosynthesis; dUMP from dCTP (dUTP route): step 1/2. Catalyzes the deamination of dCTP to dUTP. In Albidiferax ferrireducens (strain ATCC BAA-621 / DSM 15236 / T118) (Rhodoferax ferrireducens), this protein is dCTP deaminase.